A 254-amino-acid polypeptide reads, in one-letter code: 4-hydroxy-tetrahydrodipicolinate reductase (254 aa).

NAD(+) is bound by residues 8 to 13 (GASGKM), 87 to 89 (GTT), and 111 to 114 (ATNM). Residue H143 is the Proton donor/acceptor of the active site. H144 contributes to the (S)-2,3,4,5-tetrahydrodipicolinate binding site. K147 serves as the catalytic Proton donor. 153-154 (GT) is a binding site for (S)-2,3,4,5-tetrahydrodipicolinate.

This sequence belongs to the DapB family.

It is found in the cytoplasm. The catalysed reaction is (S)-2,3,4,5-tetrahydrodipicolinate + NAD(+) + H2O = (2S,4S)-4-hydroxy-2,3,4,5-tetrahydrodipicolinate + NADH + H(+). It catalyses the reaction (S)-2,3,4,5-tetrahydrodipicolinate + NADP(+) + H2O = (2S,4S)-4-hydroxy-2,3,4,5-tetrahydrodipicolinate + NADPH + H(+). Its pathway is amino-acid biosynthesis; L-lysine biosynthesis via DAP pathway; (S)-tetrahydrodipicolinate from L-aspartate: step 4/4. In terms of biological role, catalyzes the conversion of 4-hydroxy-tetrahydrodipicolinate (HTPA) to tetrahydrodipicolinate. This Campylobacter fetus subsp. fetus (strain 82-40) protein is 4-hydroxy-tetrahydrodipicolinate reductase.